A 555-amino-acid chain; its full sequence is Urocanate hydratase (555 aa).

Residues 51-52, Gln129, 175-177, Glu195, 262-266, 272-273, and Tyr321 each bind NAD(+); these read GG, GMG, QTSAH, and YL. Cys409 is a catalytic residue. Residue Gly491 participates in NAD(+) binding.

This sequence belongs to the urocanase family. Requires NAD(+) as cofactor.

The protein resides in the cytoplasm. The enzyme catalyses 4-imidazolone-5-propanoate = trans-urocanate + H2O. It participates in amino-acid degradation; L-histidine degradation into L-glutamate; N-formimidoyl-L-glutamate from L-histidine: step 2/3. Catalyzes the conversion of urocanate to 4-imidazolone-5-propionate. In Stenotrophomonas maltophilia (strain R551-3), this protein is Urocanate hydratase.